We begin with the raw amino-acid sequence, 73 residues long: uncharacterized protein (73 aa).

Transmembrane regions (helical) follow at residues 10–30 (ILLA…YVSA) and 42–62 (YSTV…IYLI).

It localises to the cell membrane. This is an uncharacterized protein from Archaeoglobus fulgidus (strain ATCC 49558 / DSM 4304 / JCM 9628 / NBRC 100126 / VC-16).